The chain runs to 158 residues: 3-hydroxyacyl-[acyl-carrier-protein] dehydratase FabZ (158 aa).

The active site involves His-57.

This sequence belongs to the thioester dehydratase family. FabZ subfamily.

The protein localises to the cytoplasm. It catalyses the reaction a (3R)-hydroxyacyl-[ACP] = a (2E)-enoyl-[ACP] + H2O. Its function is as follows. Involved in unsaturated fatty acids biosynthesis. Catalyzes the dehydration of short chain beta-hydroxyacyl-ACPs and long chain saturated and unsaturated beta-hydroxyacyl-ACPs. This Helicobacter acinonychis (strain Sheeba) protein is 3-hydroxyacyl-[acyl-carrier-protein] dehydratase FabZ.